Here is a 1209-residue protein sequence, read N- to C-terminus: Major DNA-binding protein (1209 aa).

The tract at residues 290 to 312 (NAGKGSGRAQRQGDGSGSKNSAS) is disordered. A zinc finger spans residues 503–516 (CGLCNQATRPACAH). The Required for filament formation motif lies at 849 to 850 (FW). The required for nuclear localization stretch occupies residues 1182 to 1209 (QKRSLPDDILFDMGAPPEKKSGLTFDML).

The protein belongs to the herpesviridae major DNA-binding protein family. Homooligomers. Forms double-helical filaments necessary for the formation of replication compartments within the host nucleus. Interacts with the origin-binding protein. Interacts with the helicase primase complex; this interaction stimulates primer synthesis activity of the helicase-primase complex. Interacts with the DNA polymerase. Interacts with the alkaline exonuclease; this interaction increases its nuclease processivity.

It localises to the host nucleus. Plays several crucial roles in viral infection. Participates in the opening of the viral DNA origin to initiate replication by interacting with the origin-binding protein. May disrupt loops, hairpins and other secondary structures present on ssDNA to reduce and eliminate pausing of viral DNA polymerase at specific sites during elongation. Promotes viral DNA recombination by performing strand-transfer, characterized by the ability to transfer a DNA strand from a linear duplex to a complementary single-stranded DNA circle. Can also catalyze the renaturation of complementary single strands. Additionally, reorganizes the host cell nucleus, leading to the formation of prereplicative sites and replication compartments. This process is driven by the protein which can form double-helical filaments in the absence of DNA. The protein is Major DNA-binding protein of Equine herpesvirus 1 (strain Ab4p) (EHV-1).